The primary structure comprises 835 residues: uncharacterized protein (835 aa).

This is an uncharacterized protein from Mycoplasma genitalium (strain ATCC 33530 / DSM 19775 / NCTC 10195 / G37) (Mycoplasmoides genitalium).